The chain runs to 319 residues: ATP-dependent 6-phosphofructokinase (319 aa).

ATP is bound at residue Gly-11. 21 to 25 (RAVVR) lines the ADP pocket. ATP contacts are provided by residues 72 to 73 (RC) and 102 to 105 (GDGS). Asp-103 contacts Mg(2+). 125-127 (TID) serves as a coordination point for substrate. Asp-127 functions as the Proton acceptor in the catalytic mechanism. Arg-154 is a binding site for ADP. Substrate-binding positions include Arg-162 and 169-171 (MGR). ADP contacts are provided by residues 185-187 (GAE), Arg-211, and 213-215 (KKH). Substrate is bound by residues Glu-222, Arg-243, and 249 to 252 (HVQR).

This sequence belongs to the phosphofructokinase type A (PFKA) family. ATP-dependent PFK group I subfamily. Prokaryotic clade 'B1' sub-subfamily. As to quaternary structure, homotetramer. It depends on Mg(2+) as a cofactor.

It localises to the cytoplasm. The catalysed reaction is beta-D-fructose 6-phosphate + ATP = beta-D-fructose 1,6-bisphosphate + ADP + H(+). It functions in the pathway carbohydrate degradation; glycolysis; D-glyceraldehyde 3-phosphate and glycerone phosphate from D-glucose: step 3/4. Allosterically activated by ADP and other diphosphonucleosides, and allosterically inhibited by phosphoenolpyruvate. In terms of biological role, catalyzes the phosphorylation of D-fructose 6-phosphate to fructose 1,6-bisphosphate by ATP, the first committing step of glycolysis. The protein is ATP-dependent 6-phosphofructokinase of Bacillus mycoides (strain KBAB4) (Bacillus weihenstephanensis).